Here is a 676-residue protein sequence, read N- to C-terminus: MQGTVAFEDVAVNFSQEEWSLLSEVQRCLYHDVMLENWVLISSLGCWCGSEDEEAPSKKSISIQRVSQVSTPGAGVSPKKAHSCEMCGAILGDILHLADHQGTHHKQKLHRCEAWGNKLYDSSNRPHQNQYLGEKPYRSSVEEALFVKRCKFHVSEESSIFIQSGKDFLPSSGLLLQEATHTGEKSNSKPECESPFQWGDTHYSCGECMKHSSTKHVFVQQQRLPSREECYCWECGKSFSKYDSVSNHQRVHTGKRPYECGECGKSFSHKGSLVQHQRVHTGKRPYECGECGKSFSHKGSLVQHQRVHTGERPYECGECGKSFSQNGTLIKHQRVHTGERPYECEECGKCFTQKGNLIQHQRGHTSERPYECEECGKCFSQKGTLTEHHRVHTRERPYECGECGKSFSRKGHLRNHQRGHTGERPYECGECGKSFSRKGNLIQHQRSHTGERPYECRECRKLFRGKSHLIEHQRVHTGERPYECNECGKSFQDSSGFRVHQRVHTGEKPFECSECGKSFPQSCSLLRHRRVHTGERPYECGECGKSFHQSSSLLRHQKTHTAERPYECRECGKFFSSLLEHRRVHTGERPYECRECGKTFTRRSAHFKHQRLHTRGKPYECSECGKSFAETFSLTEHRRVHTGERPYECSECGKSFHRSSSLLRHQRVHTERSPYK.

One can recognise a KRAB domain in the interval Val-5–Leu-91. 16 consecutive C2H2-type zinc fingers follow at residues His-82–His-105, Cys-230–His-252, Tyr-258–His-280, Tyr-286–His-308, Tyr-314–His-336, Tyr-342–His-364, Tyr-370–His-392, Tyr-398–His-420, Tyr-426–His-448, Tyr-454–His-476, Tyr-482–His-504, Phe-510–His-532, Tyr-538–His-560, Tyr-591–His-613, Tyr-619–His-641, and Tyr-647–His-669.

The protein belongs to the krueppel C2H2-type zinc-finger protein family. In terms of tissue distribution, highly expressed in heart.

The protein localises to the nucleus. Transcriptional repressor. May play a role as regulator of the ubiquitin-proteasome system and autophagy-lysosomal pathway. This is Zinc finger protein 418 (ZNF418) from Homo sapiens (Human).